A 1238-amino-acid polypeptide reads, in one-letter code: MKPAARETRTPPRSPGLRWALLPLLLLLRQGQVLCAGAAPNPIFDIEAVVSPTSVLLTWKHNDSGASECRIENKMESNLTFPVKNQTSCNITGLSPGTSYTFSIISVTTNETLNKTITTEPWPVSDLHVTSVGVTQARLTWSNANGTASYRMLIEELTTHSSVNISGLKPGTNNSFAFPESNETQADFAVAEEVPDANGTKRIPVTNLSQLHKNSLVSVDPPSGQDPSLTEILLTDLKPDTQYNATIYSQAANGTEGQPRNKVFKTNSTQVSDVRAMNISASSMTLTWKSNYDGSRTSIVYKIHVAGGTHSVNQTVNKTEAIILGLSSSTLYNITVHPFLGQTEGTPGFLQVYTSPDQVSDFRVTNVSTRAIGLAWRSNDSKSFEIFIKQDGGEKHRNASTGNQSYMVEDLKPGTSYHFEIIPRGPDGTEGLSSTVNGSTDPSAVTDIRVVNISTTEMQLEWQNTDDASGYTYHLVLESKSGSIIRTNSSQKWITVGSLTPGTLYNVTIFPEVDQIQGISNSITQYTRPSSVSHIEVNTTTTTAAIRWKNEDAASASYAYSVLILKTGDGSNVTSNFTKDPSILIPELIPGVSYTVKILTQVGDGTTSLVPGWNLFCTEPEPVTSFHCEVVPKEPALVLKWACPFGMYTGFELGVRSDSWDNMTRLENCTSDDDTECRTEVAYLNFSTSYNISIATLSCGKMALPAQNICTTGITDPPTPDGSPNITSVSHNSVKVKFSGFEASHGPIKAYAVILTTGEAAQPSADVLKYTYEDFKRGASDTYVTYLIRIEEKGQSQGLSEVLNYEIDVGNQSTTLGYYNGRLEPLGSYRACVAGFTNITYNLQNDGLINGDESYVSFSPYSEAVFLPQDPGVICGAVFGCIFGALAITAVGGFIFWRKKRTDAKNNEVSFSQIKPKKSKLIRVENFEAYFKKQQADSNCGFAEEYEDLKLIGISLPKYTAEIAENRGKNRYNNVLPYDISRVKLSVQTHSTDDYINANYMPGYHSKKDFIATQGPLPNTLKDFWRMVWEKNVYAIVMLTKCVEQGRTKCEEYWPSKQAQDYGDITVAMTSEVVLPEWTIRDFVVKNMQNSESHPLRQFHFTSWPDHGVPDTTDLLINFRYLVRDYMKQIPPESPILVHCSAGVGRTGTFIAIDRLIYQIENENTVDVYGIVYDLRMHRPLMVQTEDQYVFLNQCVLDIIRAQKDSKVDLIYQNTTAMTIYENLEPVSMFGKTNGYIA.

The signal sequence occupies residues 1–28 (MKPAARETRTPPRSPGLRWALLPLLLLL). Topologically, residues 29-876 (RQGQVLCAGA…LPQDPGVICG (848 aa)) are extracellular. The 84-residue stretch at 39–122 (APNPIFDIEA…LNKTITTEPW (84 aa)) folds into the Fibronectin type-III 1 domain. N-linked (GlcNAc...) asparagine glycans are attached at residues Asn-62, Asn-78, Asn-85, Asn-90, Asn-110, Asn-114, Asn-145, Asn-164, Asn-173, Asn-182, Asn-198, Asn-207, Asn-244, Asn-253, Asn-267, Asn-278, Asn-313, Asn-317, Asn-333, Asn-366, Asn-379, Asn-398, Asn-403, Asn-437, Asn-452, Asn-488, Asn-506, Asn-538, Asn-572, Asn-576, Asn-662, Asn-668, Asn-685, Asn-691, Asn-725, Asn-811, and Asn-838. Residues 170-266 (PGTNNSFAFP…GQPRNKVFKT (97 aa)) form the Fibronectin type-III 2 domain. 6 Fibronectin type-III domains span residues 270-358 (QVSD…SPDQ), 359-443 (VSDF…TDPS), 444-527 (AVTD…TQYT), 528-621 (RPSS…TEPE), 622-718 (PVTS…TDPP), and 717-803 (PPTP…SEVL). The chain crosses the membrane as a helical span at residues 877–897 (AVFGCIFGALAITAVGGFIFW). Residues 898-1238 (RKKRTDAKNN…MFGKTNGYIA (341 aa)) are Cytoplasmic-facing. Position 910 is a phosphoserine (Ser-910). The 258-residue stretch at 942–1199 (FAEEYEDLKL…VFLNQCVLDI (258 aa)) folds into the Tyrosine-protein phosphatase domain. Substrate-binding positions include Asp-1106, 1140–1146 (CSAGVGR), and Gln-1184. Residue Cys-1140 is the Phosphocysteine intermediate of the active site.

The protein belongs to the protein-tyrosine phosphatase family. Receptor class 3 subfamily. In terms of assembly, monomer. Interacts with CTNNB1 (phosphorylated) and JUP (phosphorylated). Interacts with FLT3 (phosphorylated). Interacts with GAB1 and GRB2. As to expression, expressed at high levels in brain, kidney, spleen and intestine, and at lower levels in liver, lung, thymus and heart. Expressed at a high level in the myeloid cell line FDC-P2, and at a lower level in the pre-B lymphoid cell line WEHI-231 and the T hybridoma cell line HB21.7.31. Not expressed in the fibroblast cell line NIH3T3 or the erythroid cell line F5-5. Expressed in macrophages.

The protein resides in the cell membrane. The protein localises to the cell projection. It is found in the ruffle membrane. It localises to the cell junction. It carries out the reaction O-phospho-L-tyrosyl-[protein] + H2O = L-tyrosyl-[protein] + phosphate. Tyrosine phosphatase which dephosphorylates or contributes to the dephosphorylation of CTNND1, FLT3, PDGFRB, MET, KDR, LYN, SRC, MAPK1, MAPK3, EGFR, TJP1, OCLN, PIK3R1 and PIK3R2. Plays a role in cell adhesion, migration, proliferation and differentiation. Has a role in megakaryocytes and platelet formation. Involved in vascular development. May be involved in the mechanism of contact inhibition of cell growth. Regulator of macrophage adhesion and spreading. Positively affects cell-matrix adhesion. Positive regulator of platelet activation and thrombosis. Negative regulator of cell proliferation. Negative regulator of PDGF-stimulated cell migration; through dephosphorylation of PDGFR. Positive regulator of endothelial cell survival, as well as of VEGF-induced SRC and AKT activation; through KDR dephosphorylation. Negative regulator of EGFR signaling pathway; through EGFR dephosphorylation. Enhances the barrier function of epithelial junctions during reassembly. Negatively regulates T-cell receptor (TCR) signaling. Upon T-cell TCR activation, it is up-regulated and excluded from the immunological synapses, while upon T-cell-antigen presenting cells (APC) disengagement, it is no longer excluded and can dephosphorylate PLCG1 and LAT to down-regulate prolongation of signaling. In Mus musculus (Mouse), this protein is Receptor-type tyrosine-protein phosphatase eta (Ptprj).